The primary structure comprises 432 residues: Glutamate-1-semialdehyde 2,1-aminomutase (432 aa).

Lys265 is modified (N6-(pyridoxal phosphate)lysine).

The protein belongs to the class-III pyridoxal-phosphate-dependent aminotransferase family. HemL subfamily. In terms of assembly, homodimer. Pyridoxal 5'-phosphate is required as a cofactor.

The protein resides in the cytoplasm. It carries out the reaction (S)-4-amino-5-oxopentanoate = 5-aminolevulinate. It participates in porphyrin-containing compound metabolism; protoporphyrin-IX biosynthesis; 5-aminolevulinate from L-glutamyl-tRNA(Glu): step 2/2. In Histophilus somni (strain 129Pt) (Haemophilus somnus), this protein is Glutamate-1-semialdehyde 2,1-aminomutase.